Consider the following 208-residue polypeptide: MVNKRMQTLLMQLRQQGIHDERLLQAIEAVPRERFVDEALAHKAYENTALPIGAGQTISQPYMVARMTELLQLTPTSRVLEIGTGSGYQTAILAHLVDHVCSVERIKGLQWQAKRRLKQLDLHNVSTRHGDGWLGWQSRGPFDAIIVTAAPPEIPDALLEQLDEGGILVLPVGEQFQTLKYVQRRNNEYHIETVEAVRFVPLVKGELA.

Ser59 is a catalytic residue.

The protein belongs to the methyltransferase superfamily. L-isoaspartyl/D-aspartyl protein methyltransferase family.

The protein localises to the cytoplasm. It catalyses the reaction [protein]-L-isoaspartate + S-adenosyl-L-methionine = [protein]-L-isoaspartate alpha-methyl ester + S-adenosyl-L-homocysteine. Functionally, catalyzes the methyl esterification of L-isoaspartyl residues in peptides and proteins that result from spontaneous decomposition of normal L-aspartyl and L-asparaginyl residues. It plays a role in the repair and/or degradation of damaged proteins. The protein is Protein-L-isoaspartate O-methyltransferase of Yersinia pseudotuberculosis serotype O:1b (strain IP 31758).